The primary structure comprises 508 residues: Photosystem II CP47 reaction center protein (508 aa).

6 helical membrane passes run 21 to 36, 101 to 115, 140 to 156, 203 to 218, 237 to 252, and 457 to 472; these read SVHIMHTALVSGWAGS, IVFSGLCFLAAIWHW, GIHLFLSGVACFGFGAF, IAAGTLGILAGLFHLS, VLSSSIAAVFFAAFVV, and SFALLFFFGHIWHGAR.

It belongs to the PsbB/PsbC family. PsbB subfamily. In terms of assembly, PSII is composed of 1 copy each of membrane proteins PsbA, PsbB, PsbC, PsbD, PsbE, PsbF, PsbH, PsbI, PsbJ, PsbK, PsbL, PsbM, PsbT, PsbX, PsbY, PsbZ, Psb30/Ycf12, at least 3 peripheral proteins of the oxygen-evolving complex and a large number of cofactors. It forms dimeric complexes. Binds multiple chlorophylls. PSII binds additional chlorophylls, carotenoids and specific lipids. serves as cofactor.

It localises to the plastid. The protein resides in the chloroplast thylakoid membrane. In terms of biological role, one of the components of the core complex of photosystem II (PSII). It binds chlorophyll and helps catalyze the primary light-induced photochemical processes of PSII. PSII is a light-driven water:plastoquinone oxidoreductase, using light energy to abstract electrons from H(2)O, generating O(2) and a proton gradient subsequently used for ATP formation. The polypeptide is Photosystem II CP47 reaction center protein (Illicium oligandrum (Star anise)).